A 293-amino-acid chain; its full sequence is Transcription initiation factor IIB 2 (293 aa).

The segment at 1-31 (MKCPYCKTDNAITYDVEKGMYVCTNCASVIE) adopts a TFIIB-type zinc-finger fold. Cys-3, Cys-6, Cys-23, and Cys-26 together coordinate Zn(2+). Tandem repeats lie at residues 107-193 (SILN…ANSI) and 204-285 (EYIP…DIVD).

The protein belongs to the TFIIB family.

In terms of biological role, stabilizes TBP binding to an archaeal box-A promoter. Also responsible for recruiting RNA polymerase II to the pre-initiation complex (DNA-TBP-TFIIB). This is Transcription initiation factor IIB 2 from Saccharolobus solfataricus (strain ATCC 35092 / DSM 1617 / JCM 11322 / P2) (Sulfolobus solfataricus).